The sequence spans 86 residues: RNA-binding protein Hfq (86 aa).

The 60-residue stretch at 9–68 (DPYLNTLRKEKVPVSIYLVNGIKLQGSIESFDQFVVLLKNTVSQMVYKHAISTVVPARPV) folds into the Sm domain. Positions 67–86 (PVRLPSPTDGEHGDSEPGNA) are disordered. Residues 75-86 (DGEHGDSEPGNA) are compositionally biased toward basic and acidic residues.

The protein belongs to the Hfq family. Homohexamer.

RNA chaperone that binds small regulatory RNA (sRNAs) and mRNAs to facilitate mRNA translational regulation in response to envelope stress, environmental stress and changes in metabolite concentrations. Also binds with high specificity to tRNAs. The chain is RNA-binding protein Hfq from Pseudomonas putida (strain GB-1).